A 171-amino-acid chain; its full sequence is NADH-quinone oxidoreductase subunit I 1 (171 aa).

4Fe-4S ferredoxin-type domains lie at Ile-39 to Ala-71 and Glu-81 to Asp-110. [4Fe-4S] cluster is bound by residues Cys-51, Cys-54, Cys-57, Cys-61, Cys-90, Cys-93, Cys-96, and Cys-100.

This sequence belongs to the complex I 23 kDa subunit family. In terms of assembly, NDH-1 is composed of 14 different subunits. Subunits NuoA, H, J, K, L, M, N constitute the membrane sector of the complex. The cofactor is [4Fe-4S] cluster.

It localises to the cell inner membrane. The catalysed reaction is a quinone + NADH + 5 H(+)(in) = a quinol + NAD(+) + 4 H(+)(out). Functionally, NDH-1 shuttles electrons from NADH, via FMN and iron-sulfur (Fe-S) centers, to quinones in the respiratory chain. The immediate electron acceptor for the enzyme in this species is believed to be ubiquinone. Couples the redox reaction to proton translocation (for every two electrons transferred, four hydrogen ions are translocated across the cytoplasmic membrane), and thus conserves the redox energy in a proton gradient. This chain is NADH-quinone oxidoreductase subunit I 1, found in Rhodopseudomonas palustris (strain HaA2).